A 99-amino-acid polypeptide reads, in one-letter code: NADH-quinone oxidoreductase subunit K (99 aa).

3 consecutive transmembrane segments (helical) span residues 3 to 23, 28 to 48, and 59 to 79; these read LVNYLVLSGLLFTIGAATVLV, IIMFMGVELMLNASNLAFVAF, and VVAFFVMVVAAAEVVVGLAII.

The protein belongs to the complex I subunit 4L family. NDH-1 is composed of 14 different subunits. Subunits NuoA, H, J, K, L, M, N constitute the membrane sector of the complex.

It is found in the cell membrane. It catalyses the reaction a quinone + NADH + 5 H(+)(in) = a quinol + NAD(+) + 4 H(+)(out). Its function is as follows. NDH-1 shuttles electrons from NADH, via FMN and iron-sulfur (Fe-S) centers, to quinones in the respiratory chain. The immediate electron acceptor for the enzyme in this species is believed to be a menaquinone. Couples the redox reaction to proton translocation (for every two electrons transferred, four hydrogen ions are translocated across the cytoplasmic membrane), and thus conserves the redox energy in a proton gradient. The sequence is that of NADH-quinone oxidoreductase subunit K from Beutenbergia cavernae (strain ATCC BAA-8 / DSM 12333 / CCUG 43141 / JCM 11478 / NBRC 16432 / NCIMB 13614 / HKI 0122).